The chain runs to 440 residues: COP9 signalosome complex subunit 5 (440 aa).

The 148-residue stretch at valine 71–lysine 218 folds into the MPN domain. Residues histidine 164, histidine 166, and aspartate 177 each contribute to the Zn(2+) site. A JAMM motif motif is present at residues histidine 164–aspartate 177. The span at threonine 319–aspartate 341 shows a compositional bias: polar residues. Disordered stretches follow at residues threonine 319–aspartate 343 and serine 375–glutamate 399.

It belongs to the peptidase M67A family. CSN5 subfamily. As to quaternary structure, component of a COP9 signalosome-like (CSN) complex, composed of at least RRI1/CSN5, CSN9, RRI2/CSN10, PCI8/CSN11, CSN12 and CSI1. Within this complex it probably interacts directly with CSN12. Also interacts with RPN5. The cofactor is a divalent metal cation.

It is found in the cytoplasm. Its subcellular location is the nucleus. In terms of biological role, catalytic component of the COP9 signalosome (CSN) complex that acts as an regulator of the ubiquitin (Ubl) conjugation pathway by mediating the deneddylation of the cullin subunit of SCF-type E3 ubiquitin-protein ligase complexes. The CSN complex is involved in the regulation of the mating pheromone response. The sequence is that of COP9 signalosome complex subunit 5 (RRI1) from Saccharomyces cerevisiae (strain ATCC 204508 / S288c) (Baker's yeast).